A 710-amino-acid chain; its full sequence is Prolyl endopeptidase (710 aa).

The residue at position 1 (Met-1) is an N-acetylmethionine. At Lys-157 the chain carries N6-acetyllysine. Catalysis depends on charge relay system residues Ser-554, Asp-641, and His-680.

It belongs to the peptidase S9A family. Monomer. Post-translationally, the N-terminus is blocked.

The protein resides in the cytoplasm. It catalyses the reaction Hydrolysis of Pro-|-Xaa &gt;&gt; Ala-|-Xaa in oligopeptides.. Functionally, cleaves peptide bonds on the C-terminal side of prolyl residues within peptides that are up to approximately 30 amino acids long. This chain is Prolyl endopeptidase (PREP), found in Homo sapiens (Human).